The following is a 205-amino-acid chain: Heat shock protein beta-1 (205 aa).

R12 is modified (omega-N-methylarginine). The residue at position 15 (S15) is a Phosphoserine; by MAPKAPK2 and MAPKAPK3. 2 positions are modified to phosphoserine: S26 and S65. Residues 70 to 205 (APAYSRALSR…AAKSDETAAK (136 aa)) form an interaction with TGFB1I1 region. The sHSP domain occupies 76-184 (ALSRQLSSGV…QSNEITIPVT (109 aa)). S78 and S82 each carry phosphoserine; by MAPKAPK2, MAPKAPK3 and MAPKAPK5. Phosphoserine is present on residues S83, S86, and S98. K123 carries the post-translational modification N6-acetyllysine. Residue T174 is modified to Phosphothreonine. 2 positions are modified to phosphoserine: S176 and S199.

It belongs to the small heat shock protein (HSP20) family. In terms of assembly, homooligomer. Homodimer; becomes monomeric upon activation. Heterooligomer; with HSPB6. Associates with alpha- and beta-tubulin. Interacts with TGFB1I1. Interacts with CRYAB. Interacts with HSPB8. Interacts with HSPBAP1. In terms of processing, phosphorylated upon exposure to protein kinase C activators and heat shock. Phosphorylation by MAPKAPK2 and MAPKAPK3 in response to stress dissociates HSPB1 from large small heat-shock protein (sHsps) oligomers and impairs its chaperone activity and ability to protect against oxidative stress effectively. Phosphorylation by MAPKAPK5 in response to PKA stimulation induces F-actin rearrangement. As to expression, detected in all tissues tested: skeletal muscle, heart, aorta, large intestine, small intestine, stomach, esophagus, bladder, adrenal gland, thyroid, pancreas, testis, adipose tissue, kidney, liver, spleen, cerebral cortex, blood serum and cerebrospinal fluid. Highest levels are found in the heart and in tissues composed of striated and smooth muscle.

Its subcellular location is the cytoplasm. The protein localises to the nucleus. It localises to the cytoskeleton. It is found in the spindle. In terms of biological role, small heat shock protein which functions as a molecular chaperone probably maintaining denatured proteins in a folding-competent state. Plays a role in stress resistance and actin organization. Through its molecular chaperone activity may regulate numerous biological processes including the phosphorylation and the axonal transport of neurofilament proteins. The sequence is that of Heat shock protein beta-1 (HSPB1) from Homo sapiens (Human).